The sequence spans 1406 residues: DNA topoisomerase 2 (1406 aa).

Residues Asn-69, Asn-98, 126–128 (SSN), and 139–146 (GRNGYGAK) contribute to the ATP site. Positions 332–334 (KKK) are interaction with DNA. Position 363 to 365 (363 to 365 (QTK)) interacts with ATP. Positions 441 to 555 (CTLILTEGDS…GLLDIPGFLI (115 aa)) constitute a Toprim domain. Residues Glu-447, Asp-524, and Asp-526 each coordinate Mg(2+). One can recognise a Topo IIA-type catalytic domain in the interval 690 to 1159 (IPSVLDGFKP…SAKDLWNNDL (470 aa)). Catalysis depends on Tyr-780, which acts as the O-(5'-phospho-DNA)-tyrosine intermediate. Residues 963–972 (KLISPISLQN) are interaction with DNA. A compositionally biased stretch (acidic residues) spans 1079-1089 (EDEDEDLEESE). 4 disordered regions span residues 1079–1106 (EDED…VNGP), 1183–1215 (KTKG…KKIK), 1230–1287 (KIKA…DESG), and 1303–1406 (DEDA…FNDE). The segment covering 1090–1100 (EATRKKDKDDE) has biased composition (basic and acidic residues). The segment covering 1204 to 1214 (KKKPARRIKKI) has biased composition (basic residues). Over residues 1261-1274 (DVTSNASTPSTTIF) the composition is skewed to polar residues. Positions 1326-1336 (AKKKAPPKRKA) are enriched in basic residues. Composition is skewed to acidic residues over residues 1341–1359 (SSED…DEEV) and 1381–1406 (EISD…FNDE).

The protein belongs to the type II topoisomerase family. Homodimer. It depends on Mg(2+) as a cofactor. Mn(2+) serves as cofactor. Ca(2+) is required as a cofactor.

Its subcellular location is the nucleus. It catalyses the reaction ATP-dependent breakage, passage and rejoining of double-stranded DNA.. In terms of biological role, control of topological states of DNA by transient breakage and subsequent rejoining of DNA strands. Topoisomerase II makes double-strand breaks. The sequence is that of DNA topoisomerase 2 (TOP2) from Candida glabrata (strain ATCC 2001 / BCRC 20586 / JCM 3761 / NBRC 0622 / NRRL Y-65 / CBS 138) (Yeast).